A 108-amino-acid polypeptide reads, in one-letter code: Protein ORFa in retron Ec67 (108 aa).

The chain is Protein ORFa in retron Ec67 from Escherichia coli.